The chain runs to 113 residues: Large ribosomal subunit protein uL22 (113 aa).

Belongs to the universal ribosomal protein uL22 family. Part of the 50S ribosomal subunit.

In terms of biological role, this protein binds specifically to 23S rRNA; its binding is stimulated by other ribosomal proteins, e.g. L4, L17, and L20. It is important during the early stages of 50S assembly. It makes multiple contacts with different domains of the 23S rRNA in the assembled 50S subunit and ribosome. The globular domain of the protein is located near the polypeptide exit tunnel on the outside of the subunit, while an extended beta-hairpin is found that lines the wall of the exit tunnel in the center of the 70S ribosome. The polypeptide is Large ribosomal subunit protein uL22 (Bacillus cereus (strain ATCC 10987 / NRS 248)).